A 346-amino-acid polypeptide reads, in one-letter code: Protein RecA (346 aa).

67–74 (GPESSGKT) contacts ATP.

Belongs to the RecA family.

It is found in the cytoplasm. Functionally, can catalyze the hydrolysis of ATP in the presence of single-stranded DNA, the ATP-dependent uptake of single-stranded DNA by duplex DNA, and the ATP-dependent hybridization of homologous single-stranded DNAs. It interacts with LexA causing its activation and leading to its autocatalytic cleavage. In Frankia alni (strain DSM 45986 / CECT 9034 / ACN14a), this protein is Protein RecA.